A 656-amino-acid polypeptide reads, in one-letter code: Leucine-rich repeat-containing protein 43 (656 aa).

Positions 1-13 (MEASYESESESES) are enriched in acidic residues. Residues 1–25 (MEASYESESESESEAGPGTQRPGTG) form a disordered region. LRR repeat units follow at residues 150 to 170 (KLEE…TNLP), 172 to 193 (TLKV…CAHP), 196 to 215 (GLQH…ESLY), and 223 to 244 (NLVS…VTSL). Positions 258 to 296 (NPLALVPYYRGLTIDSLAQLCVLDDITVSPNEKHLFRGL) constitute an LRRCT domain. The disordered stretch occupies residues 512 to 554 (LSAKKGKGEKDKKGKEKDRTGKGEKEPAKEWKVLKKKKEPPKE). Residues 517 to 544 (GKGEKDKKGKEKDRTGKGEKEPAKEWKV) are compositionally biased toward basic and acidic residues.

In Homo sapiens (Human), this protein is Leucine-rich repeat-containing protein 43 (LRRC43).